Consider the following 329-residue polypeptide: Deoxynucleotidyltransferase terminal-interacting protein 1 (329 aa).

2 disordered regions span residues 1–22 (MGAT…GGLE) and 147–178 (KRGR…ILSS). The important for dimerization stretch occupies residues 56–147 (MTTSFTDPAI…RLTHELPGIK (92 aa)). Positions 147–158 (KRGRQAEEECAH) are enriched in basic and acidic residues. A DNA-binding region (a.T hook) is located at residues 159 to 173 (RGSPLPKKRKGRPPG). Serine 161 is modified (phosphoserine). A Nuclear localization signal motif is present at residues 164–170 (PKKRKGR). Residues 197–316 (REGPKWDPAR…MRKYMETLRT (120 aa)) form an important for DNA and nucleosome binding region. Residues 216 to 237 (GSRANKALGMGGTRGRIYIKHP) constitute a DNA-binding region (H-T-H motif).

In terms of assembly, monomer and homodimer. A minor proportion may form homotrimers. Interacts with ZNF541. Interacts with the terminal deoxynucleotidyltransferase DNTT. Interacts with TRERF1. Identified in a histone deacetylase complex that contains DNTTIP1, HDAC1 and MIDEAS; this complex assembles into a tetramer that contains four copies of each protein chain. Component of a histone deacetylase complex containing DNTTIP1, ZNF541, HDAC1 and HDAC2. Identified in a complex with KCTD19, HDAC1, HDAC2 and ZNF541.

Its subcellular location is the nucleus. Its function is as follows. Increases DNTT terminal deoxynucleotidyltransferase activity (in vitro). Also acts as a transcriptional regulator, binding to the consensus sequence 5'-GNTGCATG-3' following an AT-tract. Associates with RAB20 promoter and positively regulates its transcription. Binds DNA and nucleosomes; may recruit HDAC1 complexes to nucleosomes or naked DNA. The polypeptide is Deoxynucleotidyltransferase terminal-interacting protein 1 (DNTTIP1) (Homo sapiens (Human)).